The following is a 298-amino-acid chain: Tyrosine recombinase XerC (298 aa).

Positions 1–85 constitute a Core-binding (CB) domain; that stretch reads MKPIAAFQEY…SLRSFYRYLT (85 aa). One can recognise a Tyr recombinase domain in the interval 106–291; that stretch reads HLPQFFYEAE…TMAHLKNEYM (186 aa). Residues Arg-146, Lys-170, His-243, Arg-246, and His-269 contribute to the active site. Residue Tyr-278 is the O-(3'-phospho-DNA)-tyrosine intermediate of the active site.

The protein belongs to the 'phage' integrase family. XerC subfamily. In terms of assembly, forms a cyclic heterotetrameric complex composed of two molecules of XerC and two molecules of XerD.

Its subcellular location is the cytoplasm. Functionally, site-specific tyrosine recombinase, which acts by catalyzing the cutting and rejoining of the recombining DNA molecules. The XerC-XerD complex is essential to convert dimers of the bacterial chromosome into monomers to permit their segregation at cell division. It also contributes to the segregational stability of plasmids. This Lacticaseibacillus paracasei (strain ATCC 334 / BCRC 17002 / CCUG 31169 / CIP 107868 / KCTC 3260 / NRRL B-441) (Lactobacillus paracasei) protein is Tyrosine recombinase XerC.